A 138-amino-acid chain; its full sequence is MAKSIPRISSRRNGPIGSGKTVRRIPKGVIHVQASFHNTIVAVTDVRGRVVSWSSAGTSGFKGTRRGTPFAAQTAATKAIRTVVDQGMLRAEVLIKGPGLGRDAALRAIRRSGILLTFVRDVTPMPHNGCRPPKKRRV.

Residues 1–22 (MAKSIPRISSRRNGPIGSGKTV) form a disordered region.

This sequence belongs to the universal ribosomal protein uS11 family. Part of the 30S ribosomal subunit.

The protein resides in the plastid. The chain is Small ribosomal subunit protein uS11c from Cuscuta exaltata (Tall dodder).